A 104-amino-acid polypeptide reads, in one-letter code: Secretoglobin family 3A member 1 (104 aa).

The first 21 residues, 1–21 (MKLTTTFLVLCVALLSDSGVA), serve as a signal peptide directing secretion.

The protein belongs to the secretoglobin family. UGRP subfamily. Homodimer; disulfide-linked. Highly expressed in lung, where it localizes to epithelial cells lining the trachea and bronchi. Expression in lung is mainly restricted to bronchi, submucosal glands of the trachea, and tracheal epithelium, with little expression in terminal bronchioles. Expressed in uterus where it localizes to epithelial cells of the uterine glands. Also detected in heart, stomach and small intestine.

It localises to the secreted. In terms of biological role, secreted cytokine-like protein. Inhibits cell growth in vitro. In Mus musculus (Mouse), this protein is Secretoglobin family 3A member 1 (Scgb3a1).